Consider the following 243-residue polypeptide: Uridylate kinase (243 aa).

ATP is bound at residue 18–21 (KLGG). Gly-59 is a binding site for UMP. 2 residues coordinate ATP: Gly-60 and Arg-64. Residues Asp-79 and 140-147 (MGMPYFST) contribute to the UMP site. ATP-binding residues include Tyr-173 and Asp-176.

It belongs to the UMP kinase family. In terms of assembly, homohexamer.

It localises to the cytoplasm. It carries out the reaction UMP + ATP = UDP + ADP. It participates in pyrimidine metabolism; CTP biosynthesis via de novo pathway; UDP from UMP (UMPK route): step 1/1. Its activity is regulated as follows. Inhibited by UTP. Its function is as follows. Catalyzes the reversible phosphorylation of UMP to UDP. This is Uridylate kinase from Corynebacterium efficiens (strain DSM 44549 / YS-314 / AJ 12310 / JCM 11189 / NBRC 100395).